We begin with the raw amino-acid sequence, 499 residues long: Endoglucanase 3 (499 aa).

The signal sequence occupies residues 1–19; it reads MALLRCLFLLAVLLPHRNA. Residue Asp88 is the Nucleophile of the active site. Catalysis depends on residues His416, Asp467, and Glu476.

This sequence belongs to the glycosyl hydrolase 9 (cellulase E) family. As to expression, expressed in flowers.

The protein localises to the secreted. It catalyses the reaction Endohydrolysis of (1-&gt;4)-beta-D-glucosidic linkages in cellulose, lichenin and cereal beta-D-glucans.. The protein is Endoglucanase 3 (GLU8) of Oryza sativa subsp. japonica (Rice).